The sequence spans 197 residues: Ribosomal RNA large subunit methyltransferase E (197 aa).

S-adenosyl-L-methionine contacts are provided by Gly-50, Trp-52, Asp-70, Asp-88, and Asp-111. Lys-151 (proton acceptor) is an active-site residue.

Belongs to the class I-like SAM-binding methyltransferase superfamily. RNA methyltransferase RlmE family.

Its subcellular location is the cytoplasm. It carries out the reaction uridine(2552) in 23S rRNA + S-adenosyl-L-methionine = 2'-O-methyluridine(2552) in 23S rRNA + S-adenosyl-L-homocysteine + H(+). Functionally, specifically methylates the uridine in position 2552 of 23S rRNA at the 2'-O position of the ribose in the fully assembled 50S ribosomal subunit. The chain is Ribosomal RNA large subunit methyltransferase E from Syntrophobacter fumaroxidans (strain DSM 10017 / MPOB).